Consider the following 510-residue polypeptide: MSEEKKSVELSGDIDFIETPPAKASQFETGEDCGIEVTKAAAIPNPPLAVDGPGNESFSNYLLGGTLVGLPAFLTWFFGGGAKTFVFFFLLSVLPVLVAFWTYASTFSPRTNEKVKLPGRPVEHYITFKREEDKAKWHGKNKIPMQTFAEMYLDGLVDFNGDTLDVMEYRHDWANFSFTWDLFKFIVGTFFVDVLFHTKAQDEEQVRPNYDSGNDHYAWFLGPRMIYTSGIISDPEKEETLEEMQDNKMAIVCEKIGLKEGETMLDIGCGWGTLARFASLNYGAKVTGLTIAENQTAWGNDALRKAGIPEEQSKILCMDYRDAPRTKFDKITQLEMGEHVGIRRLTGFFRQCYDMLKDDGAMYVQLSGLRQAWQYEDFIWGLYLNKYIFRGADASTPLWYYVKCLEQAGFEVKGIDTVGVHYSGTLWRWYRNWVGNVEAIKAKYGPRWYRIWELFLAWSVIASRQGSATCYQMVVVKNLNSTHRINGVASQFGLAGALAASRAAGKSRLP.

The N-linked (GlcNAc...) asparagine glycan is linked to Asn-55. 2 consecutive transmembrane segments (helical) span residues 62–82 (LLGGTLVGLPAFLTWFFGGGA) and 84–104 (TFVFFFLLSVLPVLVAFWTYA). Residue Asn-175 is glycosylated (N-linked (GlcNAc...) asparagine). S-adenosyl-L-methionine contacts are provided by residues 227-228 (YT), 264-272 (MLDIGCGWG), 290-295 (TIAENQ), and 320-321 (YR). Asn-294 carries N-linked (GlcNAc...) asparagine glycosylation.

Belongs to the CFA/CMAS family.

Its subcellular location is the membrane. It carries out the reaction a (4E,8E)-4-sphinga-4,8-dienine ceramide + S-adenosyl-L-methionine = a 9-methyl-(4E,8E)-sphinga-4,8-dienine ceramide + S-adenosyl-L-homocysteine + H(+). Its pathway is lipid metabolism; sphingolipid metabolism. In terms of biological role, catalyzes methylation of the sphingoid base component of glucosylceramides (GluCers) at the C9-position. Sphingolipid C9-methylation requires 4,8-desaturated ceramides as substrates. Glucosylceramides play important roles in growth, differentiation and pathogenicity. The methyl group at the C9-position distinguishes fungal glucosylceramides from those of plants and animals and may thus play a role in host-pathogen interactions enabling the host to recognize the fungal attack and initiate specific defense responses. This chain is Sphingolipid C9-methyltransferase B, found in Emericella nidulans (strain FGSC A4 / ATCC 38163 / CBS 112.46 / NRRL 194 / M139) (Aspergillus nidulans).